We begin with the raw amino-acid sequence, 301 residues long: Small ribosomal subunit protein uS2 (301 aa).

The protein belongs to the universal ribosomal protein uS2 family.

The protein is Small ribosomal subunit protein uS2 of Acidobacterium capsulatum (strain ATCC 51196 / DSM 11244 / BCRC 80197 / JCM 7670 / NBRC 15755 / NCIMB 13165 / 161).